The sequence spans 380 residues: Alcohol dehydrogenase 1 (380 aa).

Residues Cys-48, Thr-50, His-70, Cys-100, Cys-103, Cys-106, Cys-114, and Cys-178 each contribute to the Zn(2+) site. Thr-50 and His-70 together coordinate an alcohol. Position 50 (Thr-50) interacts with NAD(+). NAD(+) is bound by residues Gly-203–Gly-208, Asp-227, Arg-232, Thr-273, Val-296, Val-296–Val-298, and Arg-373.

The protein belongs to the zinc-containing alcohol dehydrogenase family. As to quaternary structure, homodimer. It depends on Zn(2+) as a cofactor.

The protein resides in the cytoplasm. The catalysed reaction is a primary alcohol + NAD(+) = an aldehyde + NADH + H(+). The enzyme catalyses a secondary alcohol + NAD(+) = a ketone + NADH + H(+). In Trifolium repens (Creeping white clover), this protein is Alcohol dehydrogenase 1 (ADH1).